The sequence spans 438 residues: Putative phospholipase A2 (438 aa).

S257 functions as the Nucleophile in the catalytic mechanism. Residues D291 and H368 each act as charge relay system in the active site.

It belongs to the serine esterase family.

It localises to the cytoplasm. The protein localises to the nucleus. It catalyses the reaction a 1-O-alkyl-2-acetyl-sn-glycero-3-phosphocholine + H2O = a 1-O-alkyl-sn-glycero-3-phosphocholine + acetate + H(+). The polypeptide is Putative phospholipase A2 (Schizosaccharomyces pombe (strain 972 / ATCC 24843) (Fission yeast)).